Consider the following 516-residue polypeptide: Threonine synthase 2, chloroplastic (516 aa).

The transit peptide at 1–33 directs the protein to the chloroplast; sequence MASFSLPHSATYFPSHSETSLKPHSAASFTVRC. Over residues 1–37 the composition is skewed to polar residues; that stretch reads MASFSLPHSATYFPSHSETSLKPHSAASFTVRCTSAS. Residues 1-55 are disordered; that stretch reads MASFSLPHSATYFPSHSETSLKPHSAASFTVRCTSASPAVPPQTPQKPRRSPDEN. Residues 133-135, 156-158, asparagine 163, leucine 164, lysine 172, and asparagine 178 each bind S-adenosyl-L-methionine; these read PYG and SAF. Lysine 194 is subject to N6-(pyridoxal phosphate)lysine. Pyridoxal 5'-phosphate contacts are provided by residues 326 to 330 and threonine 464; that span reads GNLGN.

This sequence belongs to the threonine synthase family. Homodimer. Pyridoxal 5'-phosphate is required as a cofactor.

The protein resides in the plastid. It is found in the chloroplast. The enzyme catalyses O-phospho-L-homoserine + H2O = L-threonine + phosphate. It participates in amino-acid biosynthesis; L-threonine biosynthesis; L-threonine from L-aspartate: step 5/5. Allosterically activated by S-adenosyl-methionine (SAM). Its function is as follows. Catalyzes the gamma-elimination of phosphate from L-phosphohomoserine and the beta-addition of water to produce L-threonine. This chain is Threonine synthase 2, chloroplastic (TS2), found in Arabidopsis thaliana (Mouse-ear cress).